Reading from the N-terminus, the 579-residue chain is MQDFWQAAAAQLERELTPQQFKTWIKPLAPVAFDEEAHALRIAAPNRFKLDWVKSQFSGRITALACEYWETQVSVHFVLDPAASGRAAAYTQQAMQQGQDAPAAMGTAMGAGHAPYPGMAGMAGGQSYGPAGAQVPGAHPNQMAGYPDYPSQSNGAPAGYGGAAGGQTPYSQSQQSAQGRGAAPTGHPLQGNSAAHLPDMGEIDVAQMDPAEASARSYRVPSPQPAAPAGAQQQSDTVHERSRLNPILTFDNFVTGKANQLARAAAIQVANNPGKSYNPLYLYGGVGLGKTHLIHAIGNFMLMENPRARIRYIHAEQYVSDVVKAYQRKAFDEFKRYYHSLDLLLIDDIQFFSGKNRTQEEFFYAFEALIANRAQVIITSDTYPKEITGIDDRLISRFDSGLTVAIEPPELEMRVAILMKKAAAENVSVPEEVAFFVAKHLRSNVRELEGALRKILAFSNFHGKDITIDVTREALKDLLTVQNRQISVENIQKTCADFYNIKVADMYSKKRPANIARPRQIAMYLAKELTQKSLPEIGELFGGRDHTTVLHAVRKIAEERSKDAQLNHELHVLEQTLKG.

The interval 1 to 71 (MQDFWQAAAA…TALACEYWET (71 aa)) is domain I, interacts with DnaA modulators. The segment at 71–242 (TQVSVHFVLD…QQSDTVHERS (172 aa)) is domain II. Disordered stretches follow at residues 131-196 (AGAQ…SAAH) and 212-240 (EASARSYRVPSPQPAAPAGAQQQSDTVHE). The span at 171–183 (SQSQQSAQGRGAA) shows a compositional bias: low complexity. Positions 243–459 (RLNPILTFDN…GALRKILAFS (217 aa)) are domain III, AAA+ region. 4 residues coordinate ATP: Gly287, Gly289, Lys290, and Thr291. The tract at residues 460-579 (NFHGKDITID…LHVLEQTLKG (120 aa)) is domain IV, binds dsDNA.

It belongs to the DnaA family. In terms of assembly, oligomerizes as a right-handed, spiral filament on DNA at oriC.

The protein localises to the cytoplasm. Plays an essential role in the initiation and regulation of chromosomal replication. ATP-DnaA binds to the origin of replication (oriC) to initiate formation of the DNA replication initiation complex once per cell cycle. Binds the DnaA box (a 9 base pair repeat at the origin) and separates the double-stranded (ds)DNA. Forms a right-handed helical filament on oriC DNA; dsDNA binds to the exterior of the filament while single-stranded (ss)DNA is stabiized in the filament's interior. The ATP-DnaA-oriC complex binds and stabilizes one strand of the AT-rich DNA unwinding element (DUE), permitting loading of DNA polymerase. After initiation quickly degrades to an ADP-DnaA complex that is not apt for DNA replication. Binds acidic phospholipids. This is Chromosomal replication initiator protein DnaA from Cupriavidus metallidurans (strain ATCC 43123 / DSM 2839 / NBRC 102507 / CH34) (Ralstonia metallidurans).